The following is a 572-amino-acid chain: Hsp70-Hsp90 organizing protein 1 (572 aa).

TPR repeat units follow at residues 2–35 (AEEAKAKGNAAFSSGDFTTAINHFTEAIALAPTN), 37–69 (VLFSNRSAAHASLHQYAEALSDAKETIKLKPYW), and 70–103 (PKGYSRLGAAHLGLNQFELAVTAYKKGLDVDPTN). Residues 133-172 (GPEMWTKLTSDPSTRGFLQQPDFVNMMQEIQKNPSSLNLY) form the STI1 1 domain. At Ser-167 the chain carries Phosphoserine. A disordered region spans residues 189–248 (KFRPPPPQGDEAEVPESDMGQSSSNEPEVEKKREPEPEPEPEVTEEKEKKERKEKAKKEK). The segment covering 232–248 (TEEKEKKERKEKAKKEK) has biased composition (basic and acidic residues). Residues 241 to 258 (KEKAKKEKELGNAAYKKK) carry the Bipartite nuclear localization signal motif. TPR repeat units follow at residues 244–277 (AKKEKELGNAAYKKKDFETAIQHYSTAIEIDDED), 279–311 (SYLTNRAAVYLEMGKYNECIEDCNKAVERGREL), 319–356 (ARALTRKGTALTKMAKCSKDYEPAIEAFQKALTEHRNP), 358–382 (TLKRLNDAERAKKEWEQKQYFDPKL), 383–416 (GDEEREKGNDFFKEQKYPEAIKHYTEAIKRNPND), 418–450 (KAYSNRAASYTKLGAMPEGLKDAEKCIELDPTF), and 451–484 (SKGYSRKAAVQFFLKEYDNAMETYQAGLEHDPSN). In terms of domain architecture, STI1 2 spans 521 to 560 (DPEIQNILTDPVMRQVLSDLQENPSAAQKHMQNPMVMNKI).

As to quaternary structure, co-chaperone that forms a complex with HSP70 and HSP90 and preproteins (e.g. chloroplast preproteins). Phosphorylated. Post-translationally, acetylated.

The protein resides in the cytoplasm. The protein localises to the nucleus. Its function is as follows. Mediates the association of the molecular chaperones HSP70 and HSP90. Mediates nuclear encoded chloroplast preproteins binding to HSP90 prior to chloroplastic sorting. The chain is Hsp70-Hsp90 organizing protein 1 (HOP1) from Arabidopsis thaliana (Mouse-ear cress).